A 757-amino-acid chain; its full sequence is Inhibitor of nuclear factor kappa-B kinase subunit beta (757 aa).

The region spanning 15–300 is the Protein kinase domain; it reads WEMKERLGTG…DPQYGPNGCF (286 aa). Residues 21–29 and lysine 44 each bind ATP; that span reads LGTGGFGNV. Residue aspartate 145 is the Proton acceptor of the active site. A Glycyl lysine isopeptide (Lys-Gly) (interchain with G-Cter in ubiquitin) cross-link involves residue lysine 163. The residue at position 177 (serine 177) is a Phosphoserine; by TBK1 and PKC/PRKCZ. At cysteine 179 the chain carries S-nitrosocysteine. Phosphoserine; by TBK1, PKC/PRKCZ and PDPK1 is present on serine 181. Proline 191 is subject to Hydroxyproline. A leucine-zipper region spans residues 458–479; that stretch reads LLRNNSCLSKMKNAMASTAQQL. Phosphoserine; by autocatalysis is present on serine 670. Serine 672 carries the phosphoserine modification. Serine 675, serine 682, serine 689, serine 692, serine 697, serine 705, serine 733, and serine 740 each carry phosphoserine; by autocatalysis. Residues 683-703 are disordered; the sequence is HPGQLMSQPSSACDSLPESDK. Positions 737-742 are NEMO-binding; the sequence is LDWSWL.

Belongs to the protein kinase superfamily. Ser/Thr protein kinase family. I-kappa-B kinase subfamily. As to quaternary structure, component of the I-kappa-B-kinase (IKK) core complex consisting of CHUK, IKBKB and IKBKG; probably four alpha/CHUK-beta/IKBKB dimers are associated with four gamma/IKBKG subunits. The IKK core complex seems to associate with regulatory or adapter proteins to form a IKK-signalosome holo-complex. The IKK complex associates with TERF2IP/RAP1, leading to promote IKK-mediated phosphorylation of RELA/p65. Part of a complex composed of NCOA2, NCOA3, CHUK/IKKA, IKBKB, IKBKG and CREBBP. Part of a 70-90 kDa complex at least consisting of CHUK/IKKA, IKBKB, NFKBIA, RELA, ELP1 and MAP3K14. Found in a membrane raft complex, at least composed of BCL10, CARD11, DPP4 and IKBKB. Interacts with SQSTM1 through PRKCZ or PRKCI. Forms an NGF-induced complex with IKBKB, PRKCI and TRAF6. May interact with MAVS/IPS1. Interacts with NALP2. Interacts with TICAM1. Interacts with FAF1; the interaction disrupts the IKK complex formation. Interacts with ATM. Part of a ternary complex consisting of TANK, IKBKB and IKBKG. Interacts with NIBP; the interaction is direct. Interacts with ARRB1 and ARRB2. Interacts with TRIM21. Interacts with NLRC5; prevents IKBKB phosphorylation and kinase activity. Interacts with PDPK1. Interacts with EIF2AK2/PKR. The phosphorylated form interacts with PPM1A and PPM1B. Interacts with ZNF268 isoform 2; the interaction is further increased in a TNF-alpha-dependent manner. Interacts with IKBKE. Interacts with ZC3H12A. Interacts with AKAP13. Interacts with LRRC14; disrupts IKBKB-IKBKG interaction preventing I-kappa-B-kinase (IKK) core complex formation and leading to a decrease of IKBKB phosphorylation and NF-kappaB activation. Interacts with SASH1. Interacts with ARFIP2. Interacts with FKBP5. Interacts with kinase TBK1; the complex interacts with STAT1, leading to phosphorylation of STAT1 on 'Thr-748' by IKBKB. Upon cytokine stimulation, phosphorylated on Ser-177 and Ser-181 by MEKK1 and/or MAP3K14/NIK as well as TBK1 and PRKCZ; which enhances activity. Phosphorylated by MAP3K7/TAK1 in response to NOD1 and NOD2 signaling, promoting activation and phosphorylation of NF-kappa-B inhibitors, leading to NF-kappa-B activation. Once activated, autophosphorylates on the C-terminal serine cluster; which decreases activity and prevents prolonged activation of the inflammatory response. Phosphorylated by the IKK-related kinases TBK1 and IKBKE, which is associated with reduced CHUK/IKKA and IKBKB activity and NF-kappa-B-dependent gene transcription. Dephosphorylated at Ser-177 and Ser-181 by PPM1A and PPM1B. In terms of processing, ubiquitinated. Monoubiquitination involves TRIM21 that leads to inhibition of Tax-induced NF-kappa-B signaling. 'Ser-163' may not serve as a monoubiquitination site. Ubiquitination on 'Ser-163' may modulate phosphorylation on C-terminal serine residues. Post-translationally, hydroxylated by PHD1/EGLN2, loss of hydroxylation under hypoxic conditions results in activation of NF-kappa-B. Detected in heart (at protein level). Expressed in liver, kidney and spleen.

Its subcellular location is the cytoplasm. It is found in the nucleus. The protein localises to the membrane raft. It catalyses the reaction L-seryl-[I-kappa-B protein] + ATP = O-phospho-L-seryl-[I-kappa-B protein] + ADP + H(+). It carries out the reaction L-seryl-[protein] + ATP = O-phospho-L-seryl-[protein] + ADP + H(+). The enzyme catalyses L-threonyl-[protein] + ATP = O-phospho-L-threonyl-[protein] + ADP + H(+). Its function is as follows. Serine kinase that plays an essential role in the NF-kappa-B signaling pathway which is activated by multiple stimuli such as inflammatory cytokines, bacterial or viral products, DNA damages or other cellular stresses. Acts as a part of the canonical IKK complex in the conventional pathway of NF-kappa-B activation. Phosphorylates inhibitors of NF-kappa-B on 2 critical serine residues. These modifications allow polyubiquitination of the inhibitors and subsequent degradation by the proteasome. In turn, free NF-kappa-B is translocated into the nucleus and activates the transcription of hundreds of genes involved in immune response, growth control, or protection against apoptosis. In addition to the NF-kappa-B inhibitors, phosphorylates several other components of the signaling pathway including NEMO/IKBKG, NF-kappa-B subunits RELA and NFKB1, as well as IKK-related kinases TBK1 and IKBKE. IKK-related kinase phosphorylations may prevent the overproduction of inflammatory mediators since they exert a negative regulation on canonical IKKs. Phosphorylates FOXO3, mediating the TNF-dependent inactivation of this pro-apoptotic transcription factor. Also phosphorylates other substrates including NAA10, NCOA3, BCL10 and IRS1. Phosphorylates RIPK1 at 'Ser-25' which represses its kinase activity and consequently prevents TNF-mediated RIPK1-dependent cell death. Phosphorylates the C-terminus of IRF5, stimulating IRF5 homodimerization and translocation into the nucleus. Following bacterial lipopolysaccharide (LPS)-induced TLR4 endocytosis, phosphorylates STAT1 at 'Thr-748' which restricts interferon signaling and anti-inflammatory responses and promotes innate inflammatory responses. IKBKB-mediated phosphorylation of STAT1 at 'Thr-748' promotes binding of STAT1 to the ARID5A promoter, resulting in transcriptional activation of ARID5A and subsequent ARID5A-mediated stabilization of IL6. It also promotes binding of STAT1 to the IL12B promoter and activation of IL12B transcription. The sequence is that of Inhibitor of nuclear factor kappa-B kinase subunit beta (Ikbkb) from Mus musculus (Mouse).